A 156-amino-acid polypeptide reads, in one-letter code: Small ribosomal subunit protein uS7 (156 aa).

Belongs to the universal ribosomal protein uS7 family. Part of the 30S ribosomal subunit. Contacts proteins S9 and S11.

In terms of biological role, one of the primary rRNA binding proteins, it binds directly to 16S rRNA where it nucleates assembly of the head domain of the 30S subunit. Is located at the subunit interface close to the decoding center, probably blocks exit of the E-site tRNA. This chain is Small ribosomal subunit protein uS7, found in Salmonella agona (strain SL483).